A 212-amino-acid chain; its full sequence is Thymidylate kinase (212 aa).

An ATP-binding site is contributed by 9–16 (GIDGCGKT).

It belongs to the thymidylate kinase family.

The enzyme catalyses dTMP + ATP = dTDP + ADP. Its function is as follows. Phosphorylation of dTMP to form dTDP in both de novo and salvage pathways of dTTP synthesis. The sequence is that of Thymidylate kinase from Synechococcus sp. (strain CC9311).